Here is a 205-residue protein sequence, read N- to C-terminus: Ribonuclease HII (205 aa).

Residues 16 to 205 (VSEVGIDEVG…KSFLKKSKLI (190 aa)) form the RNase H type-2 domain. A divalent metal cation contacts are provided by Asp22, Glu23, and Asp118.

Belongs to the RNase HII family. Mn(2+) serves as cofactor. Mg(2+) is required as a cofactor.

The protein resides in the cytoplasm. It catalyses the reaction Endonucleolytic cleavage to 5'-phosphomonoester.. Its function is as follows. Endonuclease that specifically degrades the RNA of RNA-DNA hybrids. This is Ribonuclease HII from Prochlorococcus marinus (strain AS9601).